Consider the following 327-residue polypeptide: Cobalamin biosynthesis protein CobD (327 aa).

A run of 4 helical transmembrane segments spans residues 61–78, 80–102, 160–182, and 300–322; these read MWLT…GLVI, SILP…ILLA, GIVA…YKLI, and AALV…ASLV.

Belongs to the CobD/CbiB family.

Its subcellular location is the cell membrane. It participates in cofactor biosynthesis; adenosylcobalamin biosynthesis. In terms of biological role, converts cobyric acid to cobinamide by the addition of aminopropanol on the F carboxylic group. In Brucella suis biovar 1 (strain 1330), this protein is Cobalamin biosynthesis protein CobD.